The primary structure comprises 241 residues: tRNA (guanine-N(7)-)-methyltransferase (241 aa).

The span at 1–10 (MTESNDTPIQ) shows a compositional bias: polar residues. The tract at residues 1-20 (MTESNDTPIQTEEGDERQHR) is disordered. Glutamate 71, glutamate 96, aspartate 123, and aspartate 146 together coordinate S-adenosyl-L-methionine. Aspartate 146 is a catalytic residue. Substrate contacts are provided by residues lysine 150, aspartate 182, and 219 to 222 (TKFE).

Belongs to the class I-like SAM-binding methyltransferase superfamily. TrmB family.

It carries out the reaction guanosine(46) in tRNA + S-adenosyl-L-methionine = N(7)-methylguanosine(46) in tRNA + S-adenosyl-L-homocysteine. It participates in tRNA modification; N(7)-methylguanine-tRNA biosynthesis. Functionally, catalyzes the formation of N(7)-methylguanine at position 46 (m7G46) in tRNA. The chain is tRNA (guanine-N(7)-)-methyltransferase from Pseudomonas fluorescens (strain Pf0-1).